The sequence spans 187 residues: Corticoliberin (187 aa).

The first 24 residues, 1-24 (MRLRLLVSAGMLLVALSPCLPCRA), serve as a signal peptide directing secretion. Residues 25–144 (LLSRGSVSGA…HQGALERERR (120 aa)) constitute a propeptide that is removed on maturation. The interval 75 to 95 (AARLSPNSTPLTAGRGSRPSH) is disordered. Ile-185 is subject to Isoleucine amide.

Belongs to the sauvagine/corticotropin-releasing factor/urotensin I family. In terms of assembly, interacts (via C-terminus) with CRFR1 (via N-terminal extracellular domain). As to expression, produced by the hypothalamus.

The protein resides in the secreted. Its function is as follows. Hormone regulating the release of corticotropin from pituitary gland. Induces NLRP6 in intestinal epithelial cells, hence may influence gut microbiota profile. This is Corticoliberin (Crh) from Rattus norvegicus (Rat).